Reading from the N-terminus, the 261-residue chain is 1-(5-phosphoribosyl)-5-[(5-phosphoribosylamino)methylideneamino] imidazole-4-carboxamide isomerase (261 aa).

Catalysis depends on aspartate 15, which acts as the Proton acceptor. The Proton donor role is filled by aspartate 136.

This sequence belongs to the HisA/HisF family.

Its subcellular location is the cytoplasm. It carries out the reaction 1-(5-phospho-beta-D-ribosyl)-5-[(5-phospho-beta-D-ribosylamino)methylideneamino]imidazole-4-carboxamide = 5-[(5-phospho-1-deoxy-D-ribulos-1-ylimino)methylamino]-1-(5-phospho-beta-D-ribosyl)imidazole-4-carboxamide. It participates in amino-acid biosynthesis; L-histidine biosynthesis; L-histidine from 5-phospho-alpha-D-ribose 1-diphosphate: step 4/9. In Synechococcus sp. (strain JA-2-3B'a(2-13)) (Cyanobacteria bacterium Yellowstone B-Prime), this protein is 1-(5-phosphoribosyl)-5-[(5-phosphoribosylamino)methylideneamino] imidazole-4-carboxamide isomerase.